Here is a 551-residue protein sequence, read N- to C-terminus: Solute carrier family 22 member 3 (551 aa).

The chain crosses the membrane as a helical span at residues 21–41; that stretch reads VFLLLCLTGVTFAFLFVGVVF. Residues asparagine 72, asparagine 99, and asparagine 114 are each glycosylated (N-linked (GlcNAc...) asparagine). The chain crosses the membrane as a helical span at residues 177-197; it reads LIIYLISCFGVGITGVVVAFA. A glycan (N-linked (GlcNAc...) asparagine) is linked at asparagine 199. 2 consecutive transmembrane segments (helical) span residues 236-256 and 264-284; these read IVGI…PGIA and GIQL…WVVP. The Proline-rich sequence motif lies at 284-288; it reads PESPR. N-linked (GlcNAc...) asparagine glycosylation occurs at asparagine 317. A run of 3 helical transmembrane segments spans residues 376-396, 464-484, and 493-513; these read IDFF…LLTI, GVSL…FLLF, and LPLI…MLLP.

It belongs to the major facilitator (TC 2.A.1) superfamily. Organic cation transporter (TC 2.A.1.19) family. As to expression, highly expressed in placenta. Highly expressed in kidney cortex. In kidney, expressed specifically in the proximal and distal convoluted tubules and within Bowman capsule. Expressed in brain, particularly in dopaminergic neurons of the substantia nigra compacta, non-aminergic neurons of the ventral tegmental area, substantia nigra reticulata, locus coeruleus, hippocampus and cortex. In brain, also detected in astrocytes in the substantia nigra reticulata, several hypothalamic nuclei and nigrostriatal region. Expressed in neurons and glial cells of amygdala.

It is found in the cell membrane. The protein resides in the apical cell membrane. The protein localises to the basolateral cell membrane. Its subcellular location is the mitochondrion membrane. It localises to the endomembrane system. It is found in the nucleus membrane. The protein resides in the nucleus outer membrane. The enzyme catalyses (R)-noradrenaline(out) = (R)-noradrenaline(in). The catalysed reaction is (R)-adrenaline(out) = (R)-adrenaline(in). It catalyses the reaction serotonin(out) = serotonin(in). It carries out the reaction dopamine(out) = dopamine(in). The enzyme catalyses histamine(out) = histamine(in). The catalysed reaction is tyramine(in) = tyramine(out). It catalyses the reaction guanidine(out) = guanidine(in). It carries out the reaction agmatine(out) = agmatine(in). The enzyme catalyses spermidine(in) = spermidine(out). The catalysed reaction is L-histidyl-L-proline diketopiperazine(in) = L-histidyl-L-proline diketopiperazine(out). It catalyses the reaction (R)-salsolinol(in) = (R)-salsolinol(out). In terms of biological role, electrogenic voltage-dependent transporter that mediates the transport of a variety of organic cations such as endogenous bioactive amines, cationic drugs and xenobiotics. Cation cellular uptake or release is driven by the electrochemical potential, i.e. membrane potential and concentration gradient. Functions as a Na(+)- and Cl(-)-independent, bidirectional uniporter. Implicated in monoamine neurotransmitters uptake such as dopamine, adrenaline/epinephrine, noradrenaline/norepinephrine, homovanillic acid, histamine, serotonin and tyramine, thereby supporting a role in homeostatic regulation of aminergic neurotransmission in the brain. Transports dopaminergic neuromodulators cyclo(his-pro) and salsolinol with low efficiency. May be involved in the uptake and disposition of cationic compounds by renal clearance from the blood flow. May contribute to regulate the transport of cationic compounds in testis across the blood-testis-barrier. Mediates the transport of polyamine spermidine and putrescine. Mediates the bidirectional transport of polyamine agmatine. Also transports guanidine. May also mediate intracellular transport of organic cations, thereby playing a role in amine metabolism and intracellular signaling. The chain is Solute carrier family 22 member 3 from Mus musculus (Mouse).